The following is a 59-amino-acid chain: Large ribosomal subunit protein bL32 (59 aa).

A disordered region spans residues 1-20; sequence MAVPRNRHSNARKNIRRSHH.

Belongs to the bacterial ribosomal protein bL32 family.

This is Large ribosomal subunit protein bL32 (rpmF) from Chlamydia muridarum (strain MoPn / Nigg).